The chain runs to 306 residues: Oligopeptide transport system permease protein OppB (306 aa).

Residues 1-8 (MLKFIFKR) lie on the Cytoplasmic side of the membrane. The chain crosses the membrane as a helical span at residues 9–29 (LLEALPTLFILITFSFFLMRL). At 30–99 (APGSPFTSER…IASAFPVSIK (70 aa)) the chain is on the periplasmic side. The ABC transmembrane type-1 domain maps to 94–293 (FPVSIKLGMV…TLTILFNAIV (200 aa)). The chain crosses the membrane as a helical span at residues 100-120 (LGMVAFAFAVVLGVTAGTLAA). At 121-135 (LNQNSRWDYILMSFS) the chain is on the cytoplasmic side. A helical membrane pass occupies residues 136–156 (MLGVIMPSFVFAPVLVLIFAI). Topologically, residues 157–169 (YLGWLPAGGWNGG) are periplasmic. A helical membrane pass occupies residues 170 to 190 (TAMYMILPVASLTIAYVAGIA). The Cytoplasmic segment spans residues 191–229 (RIMRGSMIEVLHSNFIRTAKAKGLSMSRIILKHALRPAL). Residues 230-250 (LPVITYLGPAFVGIITGSMVI) form a helical membrane-spanning segment. Residues 251 to 279 (ESVFGLPGMGLLFVNGALNRDYSLVLSLT) lie on the Periplasmic side of the membrane. The helical transmembrane segment at 280–300 (ILVGTLTILFNAIVDILYAII) threads the bilayer. Topologically, residues 301 to 306 (DPKIRY) are cytoplasmic.

It belongs to the binding-protein-dependent transport system permease family. OppBC subfamily. The complex is composed of two ATP-binding proteins (OppD and OppF), two transmembrane proteins (OppB and OppC) and a solute-binding protein (OppA).

It localises to the cell inner membrane. Functionally, part of the ABC transporter complex OppABCDF involved in the uptake of oligopeptides. Probably responsible for the translocation of the substrate across the membrane. This Haemophilus influenzae (strain ATCC 51907 / DSM 11121 / KW20 / Rd) protein is Oligopeptide transport system permease protein OppB (oppB).